The sequence spans 1398 residues: Pyrolysin (1398 aa).

The signal sequence occupies residues 1–26 (MNKKGLTVLFIAIMLLSVVPVHFVSA). The propeptide occupies 27–149 (GTPPVSSENS…KTKEPSLEPK (123 aa)). Residue N152 is glycosylated (N-linked (GlcNAc...) asparagine). The Peptidase S8 domain maps to 154-656 (TWVINALQFI…HGLVNVTKSW (503 aa)). D179 (charge relay system) is an active-site residue. Residues N222, N228, N240, N257, N262, N298, and N327 are each glycosylated (N-linked (GlcNAc...) asparagine). H365 acts as the Charge relay system in catalysis. The N-linked (GlcNAc...) asparagine glycan is linked to N406. Catalysis depends on S590, which acts as the Charge relay system. Residues N651, N663, N739, N792, N893, N908, N917, N929, N1048, N1056, N1084, N1117, N1133, N1140, N1148, N1208, N1233, N1237, and N1332 are each glycosylated (N-linked (GlcNAc...) asparagine).

It belongs to the peptidase S8 family. LWM pyrolysin seems to be produced by autoproteolytic activation of HMW pyrolysin. In terms of processing, glycosylated.

The protein resides in the cell envelope. Functionally, has endopeptidase activity toward caseins, casein fragments including alpha-S1-casein and synthetic peptides. The polypeptide is Pyrolysin (pls) (Pyrococcus furiosus (strain ATCC 43587 / DSM 3638 / JCM 8422 / Vc1)).